The following is a 701-amino-acid chain: Polyribonucleotide nucleotidyltransferase (701 aa).

Mg(2+)-binding residues include D487 and D493. One can recognise a KH domain in the interval 554-613 (PTMIAMKIDTDKIRDVIGKGGATIRAICEETKASIDIEDDGSIKIFGETKEAADAAKQRI). An S1 motif domain is found at 623–691 (GKIYVGKVER…NRGRIKLSIK (69 aa)).

The protein belongs to the polyribonucleotide nucleotidyltransferase family. In terms of assembly, component of the RNA degradosome, which is a multiprotein complex involved in RNA processing and mRNA degradation. The cofactor is Mg(2+).

It localises to the cytoplasm. It catalyses the reaction RNA(n+1) + phosphate = RNA(n) + a ribonucleoside 5'-diphosphate. Functionally, involved in mRNA degradation. Catalyzes the phosphorolysis of single-stranded polyribonucleotides processively in the 3'- to 5'-direction. This is Polyribonucleotide nucleotidyltransferase from Pseudomonas putida (strain ATCC 47054 / DSM 6125 / CFBP 8728 / NCIMB 11950 / KT2440).